The chain runs to 395 residues: Protein SGT1 (395 aa).

Residue K32 forms a Glycyl lysine isopeptide (Lys-Gly) (interchain with G-Cter in ubiquitin) linkage. The segment at 137–175 is disordered; it reads KKNKKQKDSTNKHTIKPVESIENRGDNNSSHSPISPLKI. A phosphoserine mark is found at S168 and S171. The CS domain maps to 182-277; the sequence is SPKFKIDWYQ…IDSTQWKKLE (96 aa). The 84-residue stretch at 312–395 folds into the SGS domain; sequence SYPSSSKKKI…PPEGMEPKHW (84 aa). Residues 373–395 form a disordered region; the sequence is DWEDVSKGTVKTSPPEGMEPKHW.

Belongs to the SGT1 family. In terms of assembly, interacts with SKP1/CBF3D. Part of SCF E3 ubiquitin ligase complexes containing SKP1, CDC53, HRT1 and some F-box proteins. Interacts with CIR1/CDC35.

Its function is as follows. Involved in ubiquitination and subsequent proteasomal degradation of target proteins. Required for both entry into S phase and kinetochore function. Also involved in cyclic AMP (cAMP) pathway, possibly by participating in the assembly or the conformational activation of specific multiprotein complexes. The sequence is that of Protein SGT1 from Saccharomyces cerevisiae (strain ATCC 204508 / S288c) (Baker's yeast).